A 414-amino-acid chain; its full sequence is Ornithine aminotransferase (414 aa).

Cysteine 154 and cysteine 163 are oxidised to a cystine. Residue lysine 262 is modified to N6-(pyridoxal phosphate)lysine.

This sequence belongs to the class-III pyridoxal-phosphate-dependent aminotransferase family. Homodimer. The cofactor is pyridoxal 5'-phosphate. Post-translationally, the disulfide bond between Cys-154 and Cys-163 is reduced by TRX1 which increases OAT catalytic activity.

It is found in the cytoplasm. It carries out the reaction a 2-oxocarboxylate + L-ornithine = L-glutamate 5-semialdehyde + an L-alpha-amino acid. The catalysed reaction is L-ornithine + 2-oxoglutarate = L-glutamate 5-semialdehyde + L-glutamate. Its pathway is amino-acid biosynthesis; L-proline biosynthesis; L-glutamate 5-semialdehyde from L-ornithine: step 1/1. With respect to regulation, unlike for mammalian OATs, activity is increased by TRX1-mediated reduction of the disulfide bond between Cys-154 and Cys-163. Binding to TRX1 may also induce conformational changes that facilitate substrate binding. Functionally, catalyzes the transamination of alpha-ketoglutarate with ornithine or N-acetylornithine and of glutamate-5-semialdehyde with glutamate and alanine. This Plasmodium yoelii yoelii protein is Ornithine aminotransferase.